A 224-amino-acid chain; its full sequence is Transcription cofactor HES-6 (224 aa).

Residues 1–31 (MAPPAAPGRDRVGREDEDGWETRGDRKARKP) are disordered. Residues 8-25 (GRDRVGREDEDGWETRGD) are compositionally biased toward basic and acidic residues. The bHLH domain occupies 25 to 77 (DRKARKPLVEKKRRARINESLQELRLLLAGAEVQAKLENAEVLELTVRRVQGV). The Orange domain occupies 96-129 (FAAGYIQCMHEVHTFVSTCQAIDATVAAELLNHL). Residues 147–161 (DALAGPPRAPGRSGW) show a composition bias toward low complexity. The segment at 147–205 (DALAGPPRAPGRSGWPAGGAPGSPIPSPPGPGDDLCSDLEEAPEAELSQAPAEGPDLVP) is disordered. Residues 181 to 190 (LCSDLEEAPE) are compositionally biased toward acidic residues. The WRPW motif motif lies at 221–224 (WRPW).

Transcription repression requires formation of a complex with a corepressor protein of the Groucho/TLE family. Interacts with HES1.

It localises to the nucleus. In terms of biological role, does not bind DNA itself but suppresses both HES1-mediated N box-dependent transcriptional repression and binding of HES1 to E box sequences. Also suppresses HES1-mediated inhibition of the heterodimer formed by ASCL1/MASH1 and TCF3/E47, allowing ASCL1 and TCF3 to up-regulate transcription in its presence. Promotes cell differentiation. The chain is Transcription cofactor HES-6 from Homo sapiens (Human).